We begin with the raw amino-acid sequence, 621 residues long: 1-deoxy-D-xylulose-5-phosphate synthase (621 aa).

Thiamine diphosphate contacts are provided by residues histidine 80 and 121–123 (GHS). Aspartate 152 contacts Mg(2+). Thiamine diphosphate contacts are provided by residues 153–154 (GA), asparagine 181, tyrosine 288, and glutamate 370. Asparagine 181 is a binding site for Mg(2+).

This sequence belongs to the transketolase family. DXPS subfamily. As to quaternary structure, homodimer. Requires Mg(2+) as cofactor. Thiamine diphosphate is required as a cofactor.

It catalyses the reaction D-glyceraldehyde 3-phosphate + pyruvate + H(+) = 1-deoxy-D-xylulose 5-phosphate + CO2. It functions in the pathway metabolic intermediate biosynthesis; 1-deoxy-D-xylulose 5-phosphate biosynthesis; 1-deoxy-D-xylulose 5-phosphate from D-glyceraldehyde 3-phosphate and pyruvate: step 1/1. In terms of biological role, catalyzes the acyloin condensation reaction between C atoms 2 and 3 of pyruvate and glyceraldehyde 3-phosphate to yield 1-deoxy-D-xylulose-5-phosphate (DXP). In Shewanella sediminis (strain HAW-EB3), this protein is 1-deoxy-D-xylulose-5-phosphate synthase.